A 169-amino-acid polypeptide reads, in one-letter code: Large ribosomal subunit protein bL19m (169 aa).

Residues Met1–Tyr16 constitute a mitochondrion transit peptide.

Belongs to the bacterial ribosomal protein bL19 family. In terms of assembly, component of the mitochondrial large ribosomal subunit (mt-LSU). Mature yeast 74S mitochondrial ribosomes consist of a small (37S) and a large (54S) subunit. The 37S small subunit contains a 15S ribosomal RNA (15S mt-rRNA) and 34 different proteins. The 54S large subunit contains a 21S rRNA (21S mt-rRNA) and 46 different proteins.

The protein resides in the mitochondrion. Component of the mitochondrial ribosome (mitoribosome), a dedicated translation machinery responsible for the synthesis of mitochondrial genome-encoded proteins, including at least some of the essential transmembrane subunits of the mitochondrial respiratory chain. The mitoribosomes are attached to the mitochondrial inner membrane and translation products are cotranslationally integrated into the membrane. bL19m is essential for respiration. The chain is Large ribosomal subunit protein bL19m (IMG1) from Saccharomyces cerevisiae (strain ATCC 204508 / S288c) (Baker's yeast).